Consider the following 394-residue polypeptide: Probable fatty acid methyltransferase (394 aa).

S-adenosyl-L-methionine is bound by residues 128–129, 163–171, and 189–194; these read YS, LLDVGCGWG, and TLSKEQ. Residue C358 is part of the active site.

This sequence belongs to the CFA/CMAS family.

The protein is Probable fatty acid methyltransferase of Pseudomonas putida (Arthrobacter siderocapsulatus).